We begin with the raw amino-acid sequence, 271 residues long: Formamidopyrimidine-DNA glycosylase (271 aa).

The active-site Schiff-base intermediate with DNA is the proline 2. The active-site Proton donor is glutamate 3. Lysine 58 serves as the catalytic Proton donor; for beta-elimination activity. The DNA site is built by histidine 91, arginine 110, and arginine 152. An FPG-type zinc finger spans residues 237 to 271; that stretch reads NVYGRGGKACKKCRKPLTEKKLGQRTTVYCTHCQK. Arginine 261 (proton donor; for delta-elimination activity) is an active-site residue.

It belongs to the FPG family. Monomer. Zn(2+) is required as a cofactor.

It catalyses the reaction Hydrolysis of DNA containing ring-opened 7-methylguanine residues, releasing 2,6-diamino-4-hydroxy-5-(N-methyl)formamidopyrimidine.. The enzyme catalyses 2'-deoxyribonucleotide-(2'-deoxyribose 5'-phosphate)-2'-deoxyribonucleotide-DNA = a 3'-end 2'-deoxyribonucleotide-(2,3-dehydro-2,3-deoxyribose 5'-phosphate)-DNA + a 5'-end 5'-phospho-2'-deoxyribonucleoside-DNA + H(+). Its function is as follows. Involved in base excision repair of DNA damaged by oxidation or by mutagenic agents. Acts as a DNA glycosylase that recognizes and removes damaged bases. Has a preference for oxidized purines, such as 7,8-dihydro-8-oxoguanine (8-oxoG). Has AP (apurinic/apyrimidinic) lyase activity and introduces nicks in the DNA strand. Cleaves the DNA backbone by beta-delta elimination to generate a single-strand break at the site of the removed base with both 3'- and 5'-phosphates. This Saccharophagus degradans (strain 2-40 / ATCC 43961 / DSM 17024) protein is Formamidopyrimidine-DNA glycosylase.